A 388-amino-acid chain; its full sequence is Na(+)/H(+) antiporter NhaA (388 aa).

11 helical membrane-spanning segments follow: residues 8–28 (FFSAASGGAIILLLSALLGLL), 57–77 (LAEFISIAPMSLFFFVVIAEI), 93–113 (ILPLISALGGMMIPACLYGLI), 123–143 (GWAIPIATDAAFTLPIILALG), 152–172 (VWLMALAIFDDLLGIVVIALF), 175–195 (SHLNGYALFAAGLITAVMIGL), 210–230 (GVVLWWALLVSGLHPTIAGVI), 254–274 (IIAPWVTWLILPLFGFVSMGM), 278–298 (AMSFHVLLAPVPLGVALGLFL), 328–348 (LFGLSLLCGIGFTISLFIAEL), and 361–381 (YGILMGSLLSALAGWLWLRFL).

The protein belongs to the NhaA Na(+)/H(+) (TC 2.A.33) antiporter family.

It is found in the cell inner membrane. It carries out the reaction Na(+)(in) + 2 H(+)(out) = Na(+)(out) + 2 H(+)(in). Na(+)/H(+) antiporter that extrudes sodium in exchange for external protons. This Zymomonas mobilis subsp. mobilis (strain ATCC 31821 / ZM4 / CP4) protein is Na(+)/H(+) antiporter NhaA.